The following is a 359-amino-acid chain: Heme A synthase (359 aa).

5 helical membrane passes run 8 to 28 (IMSIWLIVSTLLLLLMIVVGG), 94 to 114 (LLGRITGIIIIIPFLIFYYLK), 124 to 144 (LLLITCLVIIQGFMGWYMVKS), 159 to 179 (GHLLLAVVIYHQLIAELLIII), and 215 to 235 (IIIFLLYTQIMFGALVAGLDA). Heme is bound at residue H274. The next 3 helical transmembrane spans lie at 276–296 (WFGILISCLIICYAIWLIILN), 303–323 (MGMVAACLVLVQVTTGIITLV), and 328–348 (ILAALTHQVGAILILTTFLFI). H334 lines the heme pocket.

The protein belongs to the COX15/CtaA family. Type 2 subfamily. Interacts with CtaB. Heme b is required as a cofactor.

It is found in the cell membrane. It catalyses the reaction Fe(II)-heme o + 2 A + H2O = Fe(II)-heme a + 2 AH2. It functions in the pathway porphyrin-containing compound metabolism; heme A biosynthesis; heme A from heme O: step 1/1. In terms of biological role, catalyzes the conversion of heme O to heme A by two successive hydroxylations of the methyl group at C8. The first hydroxylation forms heme I, the second hydroxylation results in an unstable dihydroxymethyl group, which spontaneously dehydrates, resulting in the formyl group of heme A. The polypeptide is Heme A synthase (Orientia tsutsugamushi (strain Ikeda) (Rickettsia tsutsugamushi)).